Consider the following 372-residue polypeptide: Mitogen-activated protein kinase homolog NTF3 (372 aa).

One can recognise a Protein kinase domain in the interval 32–319; that stretch reads YVPIKPIGRG…VIEALQHPYM (288 aa). Residues 38–46 and Lys-61 each bind ATP; that span reads IGRGAYGIV. Asp-158 serves as the catalytic Proton acceptor. Thr-191 bears the Phosphothreonine mark. The TXY motif lies at 191-193; it reads TEY. Tyr-193 bears the Phosphotyrosine mark.

This sequence belongs to the protein kinase superfamily. CMGC Ser/Thr protein kinase family. MAP kinase subfamily. It depends on Mg(2+) as a cofactor. Post-translationally, dually phosphorylated on Thr-191 and Tyr-193, which activates the enzyme. Very low autophosphorylation, although dramatically increased when Mn(2+) is added to the reaction instead of Mg(2+). As to expression, ubiquitous.

It catalyses the reaction L-seryl-[protein] + ATP = O-phospho-L-seryl-[protein] + ADP + H(+). It carries out the reaction L-threonyl-[protein] + ATP = O-phospho-L-threonyl-[protein] + ADP + H(+). With respect to regulation, activated by tyrosine and threonine phosphorylation. This chain is Mitogen-activated protein kinase homolog NTF3 (NTF3), found in Nicotiana tabacum (Common tobacco).